The following is a 308-amino-acid chain: Maspardin (308 aa).

The AB hydrolase-1 domain maps to 87–159 (FCDGFRKLLD…NSFWLMPAFM (73 aa)).

The protein belongs to the AB hydrolase superfamily. Interacts with CD4. Interacts with ALDH16A1.

Its subcellular location is the cytoplasm. In terms of biological role, may play a role as a negative regulatory factor in CD4-dependent T-cell activation. This chain is Maspardin (SPG21), found in Macaca fascicularis (Crab-eating macaque).